A 431-amino-acid polypeptide reads, in one-letter code: Serine/threonine-protein kinase Sgk1 (431 aa).

The necessary for localization to the mitochondria stretch occupies residues 1–60 (MTVKTEAAKGTLTYSRMRGMVAILIAFMKQRRMGLNDFIQKIANNSYACKHPEVQSILKI). Positions 66–92 (PELMNANPSPPPSPSQQINLGPSSNPH) are disordered. At Ser74 the chain carries Phosphoserine. Ser78 bears the Phosphoserine; by MAPK7 mark. The span at 81–91 (QQINLGPSSNP) shows a compositional bias: polar residues. A Protein kinase domain is found at 98 to 355 (FHFLKVIGKG…FMEIKSHVFF (258 aa)). ATP is bound by residues 104-112 (IGKGSFGKV) and Lys127. The short motif at 131 to 141 (KKAILKKKEEK) is the Nuclear localization signal element. Residue Asp222 is the Proton acceptor of the active site. Thr256 is modified (phosphothreonine; by PDPK1). The 76-residue stretch at 356-431 (SLINWDDLIN…SYAPPTDSFL (76 aa)) folds into the AGC-kinase C-terminal domain. Residue Thr369 is modified to Phosphothreonine; by PKA. 3 positions are modified to phosphoserine: Ser397, Ser401, and Ser422.

Belongs to the protein kinase superfamily. AGC Ser/Thr protein kinase family. As to quaternary structure, homodimer; disulfide-linked. Forms a trimeric complex with FBXW7 and NOTCH1. Interacts with MAPK3/ERK1, MAPK1/ERK2, MAP2K1/MEK1, MAP2K2/MEK2, NEDD4, NEDD4L, MAPT/TAU, MAPK7, CREB1, SLC9A3R2/NHERF2 and KCNJ1/ROMK1. Associates with the mammalian target of rapamycin complex 2 (mTORC2) via an interaction with MAPKAP1/SIN1. Post-translationally, regulated by phosphorylation. Activated by phosphorylation on Ser-422 by mTORC2, transforming it into a substrate for PDPK1 which phosphorylates it on Thr-256. Phosphorylation on Ser-397 and Ser-401 are also essential for its activity. Phosphorylation on Ser-78 by MAPK7 is required for growth factor-induced cell cycle progression. In terms of processing, ubiquitinated by NEDD4L; which promotes proteasomal degradation. Ubiquitinated by SYVN1 at the endoplasmic reticulum; which promotes rapid proteasomal degradation and maintains a high turnover rate in resting cells. Isoform 2 shows enhanced stability. As to expression, expressed in most tissues with highest levels in the pancreas, followed by placenta, kidney and lung. Isoform 2 is strongly expressed in brain and pancreas, weaker in heart, placenta, lung, liver and skeletal muscle.

The protein localises to the cytoplasm. The protein resides in the nucleus. Its subcellular location is the endoplasmic reticulum membrane. It localises to the cell membrane. It is found in the mitochondrion. It catalyses the reaction L-seryl-[protein] + ATP = O-phospho-L-seryl-[protein] + ADP + H(+). The enzyme catalyses L-threonyl-[protein] + ATP = O-phospho-L-threonyl-[protein] + ADP + H(+). With respect to regulation, two specific sites, one in the kinase domain (Thr-256) and the other in the C-terminal regulatory region (Ser-422), need to be phosphorylated for its full activation. Phosphorylation at Ser-397 and Ser-401 are also essential for its activity. Activated by WNK1, WNK2, WNK3 and WNK4; which promote phosphorylation by mTORC2. In terms of biological role, serine/threonine-protein kinase which is involved in the regulation of a wide variety of ion channels, membrane transporters, cellular enzymes, transcription factors, neuronal excitability, cell growth, proliferation, survival, migration and apoptosis. Plays an important role in cellular stress response. Contributes to regulation of renal Na(+) retention, renal K(+) elimination, salt appetite, gastric acid secretion, intestinal Na(+)/H(+) exchange and nutrient transport, insulin-dependent salt sensitivity of blood pressure, salt sensitivity of peripheral glucose uptake, cardiac repolarization and memory consolidation. Up-regulates Na(+) channels: SCNN1A/ENAC, SCN5A and ASIC1/ACCN2, K(+) channels: KCNJ1/ROMK1, KCNA1-5, KCNQ1-5 and KCNE1, epithelial Ca(2+) channels: TRPV5 and TRPV6, chloride channels: BSND, CLCN2 and CFTR, glutamate transporters: SLC1A3/EAAT1, SLC1A2 /EAAT2, SLC1A1/EAAT3, SLC1A6/EAAT4 and SLC1A7/EAAT5, amino acid transporters: SLC1A5/ASCT2, SLC38A1/SN1 and SLC6A19, creatine transporter: SLC6A8, Na(+)/dicarboxylate cotransporter: SLC13A2/NADC1, Na(+)-dependent phosphate cotransporter: SLC34A2/NAPI-2B, glutamate receptor: GRIK2/GLUR6. Up-regulates carriers: SLC9A3/NHE3, SLC12A1/NKCC2, SLC12A3/NCC, SLC5A3/SMIT, SLC2A1/GLUT1, SLC5A1/SGLT1 and SLC15A2/PEPT2. Regulates enzymes: GSK3A/B, PMM2 and Na(+)/K(+) ATPase, and transcription factors: CTNNB1 and nuclear factor NF-kappa-B. Stimulates sodium transport into epithelial cells by enhancing the stability and expression of SCNN1A/ENAC. This is achieved by phosphorylating the NEDD4L ubiquitin E3 ligase, promoting its interaction with 14-3-3 proteins, thereby preventing it from binding to SCNN1A/ENAC and targeting it for degradation. Regulates store-operated Ca(+2) entry (SOCE) by stimulating ORAI1 and STIM1. Regulates KCNJ1/ROMK1 directly via its phosphorylation or indirectly via increased interaction with SLC9A3R2/NHERF2. Phosphorylates MDM2 and activates MDM2-dependent ubiquitination of p53/TP53. Phosphorylates MAPT/TAU and mediates microtubule depolymerization and neurite formation in hippocampal neurons. Phosphorylates SLC2A4/GLUT4 and up-regulates its activity. Phosphorylates APBB1/FE65 and promotes its localization to the nucleus. Phosphorylates MAPK1/ERK2 and activates it by enhancing its interaction with MAP2K1/MEK1 and MAP2K2/MEK2. Phosphorylates FBXW7 and plays an inhibitory role in the NOTCH1 signaling. Phosphorylates FOXO1 resulting in its relocalization from the nucleus to the cytoplasm. Phosphorylates FOXO3, promoting its exit from the nucleus and interference with FOXO3-dependent transcription. Phosphorylates BRAF and MAP3K3/MEKK3 and inhibits their activity. Phosphorylates SLC9A3/NHE3 in response to dexamethasone, resulting in its activation and increased localization at the cell membrane. Phosphorylates CREB1. Necessary for vascular remodeling during angiogenesis. Sustained high levels and activity may contribute to conditions such as hypertension and diabetic nephropathy. Isoform 2 exhibited a greater effect on cell plasma membrane expression of SCNN1A/ENAC and Na(+) transport than isoform 1. This is Serine/threonine-protein kinase Sgk1 (SGK1) from Homo sapiens (Human).